An 81-amino-acid chain; its full sequence is U17-lycotoxin-Ls1a (81 aa).

The signal sequence occupies residues methionine 1–alanine 22. Positions glutamine 23 to arginine 34 are excised as a propeptide. 3 disulfides stabilise this stretch: cysteine 36–cysteine 51, cysteine 50–cysteine 67, and cysteine 58–cysteine 65.

The protein belongs to the neurotoxin 02 (plectoxin) family. As to expression, expressed by the venom gland.

The protein resides in the secreted. The protein is U17-lycotoxin-Ls1a of Lycosa singoriensis (Wolf spider).